The following is a 662-amino-acid chain: ABC transporter G family member 17 (662 aa).

Residues 22–276 (LAFNDLTYNV…FSEFGSPIPE (255 aa)) form the ABC transporter domain. 69–76 (GASGAGKS) contributes to the ATP binding site. One can recognise an ABC transmembrane type-2 domain in the interval 356–566 (VETVILAKRY…PYEAVLHNEF (211 aa)). 6 consecutive transmembrane segments (helical) span residues 375–395 (LIGTRVFIVMMTGFLLATVYW), 410–430 (FFSFAMATMFYSCADGLPAFI), 451–471 (VISHSLVTLPHLFALSIGFAA), 486–508 (FIYYLMIIFASFWSGCSFVTFVS), 514–536 (VMMSYMVTFGYLSYCLLFSGFYV), and 635–655 (LWVTLAWGFFFRILFYFSLLL).

It belongs to the ABC transporter superfamily. ABCG family. Eye pigment precursor importer (TC 3.A.1.204) subfamily.

The protein resides in the membrane. The sequence is that of ABC transporter G family member 17 (ABCG17) from Arabidopsis thaliana (Mouse-ear cress).